The primary structure comprises 816 residues: Protein kinase C-binding protein NELL2 (816 aa).

Residues 1–21 (MESRVLLRTFCLIFGLGAVWG) form the signal peptide. Residues N53, N225, N293, and N298 are each glycosylated (N-linked (GlcNAc...) asparagine). Residues 64-228 (PRSIKASTAT…AQCPDLNRTC (165 aa)) form the Laminin G-like domain. In terms of domain architecture, VWFC 1 spans 272 to 331 (RTCTMKGTTYREFESWIDGCKNCTCLNGTIQCETLICPNPDCPLKSALAYVDGKCCKECK). The 43-residue stretch at 397–439 (GYDFCSERHNCMENSICRNLNDRAVCSCRDGFRALREDNAYCE) folds into the EGF-like 1 domain. 3 disulfide bridges follow: C401–C413, C407–C422, and C424–C438. The Ca(2+) site is built by D440, I441, and E443. Residues 440 to 481 (DIDECAEGRHYCRENTMCVNTPGSFMCICKTGYIRIDDYSCT) enclose the EGF-like 2; calcium-binding domain. 9 disulfide bridges follow: C444–C457, C451–C466, C468–C480, C486–C499, C493–C508, C510–C521, C525–C535, C529–C541, and C543–C552. Ca(2+) is bound by residues N459, T460, and S463. The EGF-like 3; calcium-binding domain occupies 482-522 (EHDECITNQHNCDENALCFNTVGGHNCVCKPGYTGNGTTCK). The N-linked (GlcNAc...) asparagine glycan is linked to N517. The region spanning 523-553 (AFCKDGCRNGGACIAANVCACPQGFTGPSCE) is the EGF-like 4 domain. A glycan (O-linked (GlcNAc...) threonine) is linked at T548. Ca(2+)-binding residues include D555, I556, and E558. The region spanning 555-601 (DIDECSDGFVQCDSRANCINLPGWYHCECRDGYHDNGMFSPSGESCE) is the EGF-like 5; calcium-binding domain. Disulfide bonds link C559–C572, C566–C581, and C583–C600. Ca(2+) contacts are provided by N574, L575, and W578. D602, I603, and E605 together coordinate Ca(2+). Residues 602-637 (DIDECGTGRHSCANDTICFNLDGGYDCRCPHGKNCT) form the EGF-like 6; calcium-binding domain. 3 disulfides stabilise this stretch: C606–C619, C613–C628, and C630–C636. A glycan (N-linked (GlcNAc...) asparagine) is linked at N615. Positions 621, 622, and 625 each coordinate Ca(2+). N635 carries N-linked (GlcNAc...) asparagine glycosylation. VWFC domains are found at residues 638 to 693 (GDCI…PECD) and 698 to 756 (SQCL…PRCV).

Homotrimer. Binds to PRKCB. Interacts with NICOL1; this interaction triggers epididymal differentiation. Interacts (via the EGF domains) with ROBO3 (via Fibronectin type-III 1 domain) with a 3:3 stoichiometry; this interaction promotes oligomerization of ROBO3 resulting in the repulsion of commissural axons in the midline.

The protein localises to the secreted. In terms of biological role, plays multiple roles in neural tissues, regulates neuronal proliferation, survival, differentiation, polarization, as well as axon guidance and synaptic functions. Plays an important role in axon development during neuronal differentiation through the MAPK intracellular signaling pathway. Via binding to its receptor ROBO3, plays a role in axon guidance, functioning as a repulsive axon guidance cue that contributes to commissural axon guidance to the midline. Required for neuron survival through the modulation of MAPK signaling pathways too. Involved in the regulation of hypothalamic GNRH secretion and the control of puberty. Epididymal-secreted protein that signals through a ROS1-pathway to regulate the epididymal initial segment (IS) maturation, sperm maturation and male fertility. This is Protein kinase C-binding protein NELL2 from Homo sapiens (Human).